The following is a 164-amino-acid chain: RNA pyrophosphohydrolase (164 aa).

The Nudix hydrolase domain maps to 12–158 (RYRQCAGVML…KREVYRAVVK (147 aa)). Residues 47 to 68 (GGIDPGETQQEAAMRELEEETG) carry the Nudix box motif.

It belongs to the Nudix hydrolase family. RppH subfamily. It depends on a divalent metal cation as a cofactor.

Its function is as follows. Accelerates the degradation of transcripts by removing pyrophosphate from the 5'-end of triphosphorylated RNA, leading to a more labile monophosphorylated state that can stimulate subsequent ribonuclease cleavage. The polypeptide is RNA pyrophosphohydrolase (Erythrobacter litoralis (strain HTCC2594)).